Reading from the N-terminus, the 278-residue chain is Undecaprenyl-diphosphatase 1 (278 aa).

Transmembrane regions (helical) follow at residues 46-66 (VVGF…VYFF), 91-111 (YTFT…GLAA), 119-139 (LASL…MWFA), 153-173 (SLPD…FPGF), 191-211 (VAAT…AGLY), 225-245 (PLAV…AWLL), and 256-276 (FIIY…GGAI).

Belongs to the UppP family.

Its subcellular location is the cell membrane. The enzyme catalyses di-trans,octa-cis-undecaprenyl diphosphate + H2O = di-trans,octa-cis-undecaprenyl phosphate + phosphate + H(+). Its function is as follows. Catalyzes the dephosphorylation of undecaprenyl diphosphate (UPP). Confers resistance to bacitracin. This is Undecaprenyl-diphosphatase 1 from Frankia alni (strain DSM 45986 / CECT 9034 / ACN14a).